Here is a 780-residue protein sequence, read N- to C-terminus: Dynamin-related protein 3B (780 aa).

Serine 2 carries the N-acetylserine modification. The Dynamin-type G domain maps to 40 to 315 (TIALPQVAVV…LVQHIKALLP (276 aa)). A G1 motif region spans residues 50–57 (GSQSSGKS). Position 50-57 (50-57 (GSQSSGKS)) interacts with GTP. The segment at 76–78 (CTR) is G2 motif. Positions 157-160 (DLPG) are G3 motif. Residues 157–161 (DLPGI) and 226–229 (TKLD) each bind GTP. The tract at residues 226–229 (TKLD) is G4 motif. The segment at 256–259 (VNRS) is G5 motif. 2 disordered regions span residues 536–558 (PVAR…QIKT) and 573–592 (QAVP…STSW). Residues 539–548 (RPRDTVEPER) show a composition bias toward basic and acidic residues. The span at 549-558 (TASSGSQIKT) shows a compositional bias: polar residues. Residues 654 to 745 (IEITKLLLKS…TLDELPLEAE (92 aa)) form the GED domain. Residues 753–770 (IGSEAKHEELPGTRRSRT) are compositionally biased toward basic and acidic residues. The segment at 753-780 (IGSEAKHEELPGTRRSRTETNGNGRLHM) is disordered. Over residues 771-780 (ETNGNGRLHM) the composition is skewed to polar residues.

The protein belongs to the TRAFAC class dynamin-like GTPase superfamily. Dynamin/Fzo/YdjA family. As to quaternary structure, interacts with ARC5 on peroxisomes and ELM1 on mitochondria.

It is found in the mitochondrion. The protein resides in the peroxisome. Involved in the control of mitochondrial and peroxisomal division and morphology. This chain is Dynamin-related protein 3B (DRP3B), found in Arabidopsis thaliana (Mouse-ear cress).